The chain runs to 737 residues: Phosphoribosylformylglycinamidine synthase subunit PurL (737 aa).

The active site involves histidine 50. The ATP site is built by tyrosine 53 and lysine 92. Glutamate 94 lines the Mg(2+) pocket. Substrate-binding positions include 95–98 (SHNH) and arginine 117. Catalysis depends on histidine 96, which acts as the Proton acceptor. Mg(2+) is bound at residue aspartate 118. Residue glutamine 241 coordinates substrate. Aspartate 269 contributes to the Mg(2+) binding site. 313 to 315 (ESQ) contributes to the substrate binding site. Aspartate 494 and glycine 531 together coordinate ATP. Mg(2+) is bound at residue asparagine 532. Position 534 (serine 534) interacts with substrate.

The protein belongs to the FGAMS family. In terms of assembly, monomer. Part of the FGAM synthase complex composed of 1 PurL, 1 PurQ and 2 PurS subunits.

The protein resides in the cytoplasm. The enzyme catalyses N(2)-formyl-N(1)-(5-phospho-beta-D-ribosyl)glycinamide + L-glutamine + ATP + H2O = 2-formamido-N(1)-(5-O-phospho-beta-D-ribosyl)acetamidine + L-glutamate + ADP + phosphate + H(+). Its pathway is purine metabolism; IMP biosynthesis via de novo pathway; 5-amino-1-(5-phospho-D-ribosyl)imidazole from N(2)-formyl-N(1)-(5-phospho-D-ribosyl)glycinamide: step 1/2. Functionally, part of the phosphoribosylformylglycinamidine synthase complex involved in the purines biosynthetic pathway. Catalyzes the ATP-dependent conversion of formylglycinamide ribonucleotide (FGAR) and glutamine to yield formylglycinamidine ribonucleotide (FGAM) and glutamate. The FGAM synthase complex is composed of three subunits. PurQ produces an ammonia molecule by converting glutamine to glutamate. PurL transfers the ammonia molecule to FGAR to form FGAM in an ATP-dependent manner. PurS interacts with PurQ and PurL and is thought to assist in the transfer of the ammonia molecule from PurQ to PurL. This Rhodopseudomonas palustris (strain BisA53) protein is Phosphoribosylformylglycinamidine synthase subunit PurL.